The following is a 197-amino-acid chain: Segregation and condensation protein B (197 aa).

This sequence belongs to the ScpB family. As to quaternary structure, homodimer. Homodimerization may be required to stabilize the binding of ScpA to the Smc head domains. Component of a cohesin-like complex composed of ScpA, ScpB and the Smc homodimer, in which ScpA and ScpB bind to the head domain of Smc. The presence of the three proteins is required for the association of the complex with DNA.

It is found in the cytoplasm. Functionally, participates in chromosomal partition during cell division. May act via the formation of a condensin-like complex containing Smc and ScpA that pull DNA away from mid-cell into both cell halves. The protein is Segregation and condensation protein B of Bacillus licheniformis (strain ATCC 14580 / DSM 13 / JCM 2505 / CCUG 7422 / NBRC 12200 / NCIMB 9375 / NCTC 10341 / NRRL NRS-1264 / Gibson 46).